Consider the following 291-residue polypeptide: Pyridoxal 5'-phosphate synthase subunit PdxS (291 aa).

Aspartate 23 is a binding site for D-ribose 5-phosphate. The active-site Schiff-base intermediate with D-ribose 5-phosphate is the lysine 80. Residue glycine 152 coordinates D-ribose 5-phosphate. Arginine 164 lines the D-glyceraldehyde 3-phosphate pocket. D-ribose 5-phosphate-binding positions include glycine 213 and 234–235 (GS).

It belongs to the PdxS/SNZ family. As to quaternary structure, in the presence of PdxT, forms a dodecamer of heterodimers.

It catalyses the reaction aldehydo-D-ribose 5-phosphate + D-glyceraldehyde 3-phosphate + L-glutamine = pyridoxal 5'-phosphate + L-glutamate + phosphate + 3 H2O + H(+). It participates in cofactor biosynthesis; pyridoxal 5'-phosphate biosynthesis. Catalyzes the formation of pyridoxal 5'-phosphate from ribose 5-phosphate (RBP), glyceraldehyde 3-phosphate (G3P) and ammonia. The ammonia is provided by the PdxT subunit. Can also use ribulose 5-phosphate and dihydroxyacetone phosphate as substrates, resulting from enzyme-catalyzed isomerization of RBP and G3P, respectively. The polypeptide is Pyridoxal 5'-phosphate synthase subunit PdxS (Bifidobacterium longum (strain NCC 2705)).